Consider the following 87-residue polypeptide: Mitochondrial import inner membrane translocase subunit TIM9 (87 aa).

Residue M1 is modified to N-acetylmethionine. A Twin CX3C motif motif is present at residues 35-59; it reads CFTDCVNDFTTSKLTNKEQTCIMKC. 2 cysteine pairs are disulfide-bonded: C35-C59 and C39-C55.

It belongs to the small Tim family. As to quaternary structure, heterohexamer; composed of 3 copies of TIM9 and 3 copies of TIM10, named soluble 70 kDa complex. Associates with the TIM12 component of the TIM22 complex, whose core is composed of TIM18, TIM22 and TIM54. Interacts with the transmembrane regions of multi-pass transmembrane proteins in transit.

It localises to the mitochondrion inner membrane. Its subcellular location is the mitochondrion intermembrane space. Mitochondrial intermembrane chaperone that participates in the import and insertion of multi-pass transmembrane proteins into the mitochondrial inner membrane. Also required for the transfer of beta-barrel precursors from the TOM complex to the sorting and assembly machinery (SAM complex) of the outer membrane. Acts as a chaperone-like protein that protects the hydrophobic precursors from aggregation and guide them through the mitochondrial intermembrane space. Compared to TIM10, it may have a strong structural role. The sequence is that of Mitochondrial import inner membrane translocase subunit TIM9 (TIM9) from Saccharomyces cerevisiae (strain ATCC 204508 / S288c) (Baker's yeast).